Consider the following 111-residue polypeptide: Ig kappa chain V-III region MOPC 70 (111 aa).

Positions 1 to 23 (DIVLTQSPASLAVSLGQRATISC) are framework-1. Cys23 and Cys92 form a disulfide bridge. Residues 24–38 (RASESVDNSGISFMN) are complementarity-determining-1. Residues 39 to 53 (WFQQKPGQPPKLLIY) are framework-2. Residues 54–60 (AASNQGS) are complementarity-determining-2. The tract at residues 61–92 (GVPARFSGSGSGTDFSLNIHPMEEDDTAMYFC) is framework-3. The tract at residues 93–101 (QQSKEVPWT) is complementarity-determining-3. Residues 102 to 111 (FGGGTKLEIK) are framework-4.

In Mus musculus (Mouse), this protein is Ig kappa chain V-III region MOPC 70.